We begin with the raw amino-acid sequence, 225 residues long: Phosphoglycolate phosphatase (225 aa).

Residue D11 is the Nucleophile of the active site. Residues D11, D13, and D174 each contribute to the Mg(2+) site.

This sequence belongs to the HAD-like hydrolase superfamily. CbbY/CbbZ/Gph/YieH family. It depends on Mg(2+) as a cofactor.

The catalysed reaction is 2-phosphoglycolate + H2O = glycolate + phosphate. Its pathway is organic acid metabolism; glycolate biosynthesis; glycolate from 2-phosphoglycolate: step 1/1. Specifically catalyzes the dephosphorylation of 2-phosphoglycolate. Is involved in the dissimilation of the intracellular 2-phosphoglycolate formed during the DNA repair of 3'-phosphoglycolate ends, a major class of DNA lesions induced by oxidative stress. This chain is Phosphoglycolate phosphatase, found in Nitrosococcus oceani (strain ATCC 19707 / BCRC 17464 / JCM 30415 / NCIMB 11848 / C-107).